The chain runs to 257 residues: Dihydroorotate dehydrogenase B (NAD(+)), electron transfer subunit (257 aa).

The 99-residue stretch at 2-100 (ILIEDLTVVS…MGPQGNGFDI (99 aa)) folds into the FAD-binding FR-type domain. FAD-binding positions include 51-54 (RPIS), 68-70 (VYR), and 75-76 (GT). [2Fe-2S] cluster is bound by residues C220, C225, C228, and C244.

Belongs to the PyrK family. As to quaternary structure, heterotetramer of 2 PyrK and 2 PyrD type B subunits. It depends on [2Fe-2S] cluster as a cofactor. The cofactor is FAD.

Its pathway is pyrimidine metabolism; UMP biosynthesis via de novo pathway; orotate from (S)-dihydroorotate (NAD(+) route): step 1/1. In terms of biological role, responsible for channeling the electrons from the oxidation of dihydroorotate from the FMN redox center in the PyrD type B subunit to the ultimate electron acceptor NAD(+). In Streptococcus thermophilus (strain ATCC BAA-491 / LMD-9), this protein is Dihydroorotate dehydrogenase B (NAD(+)), electron transfer subunit.